Reading from the N-terminus, the 202-residue chain is dITP/XTP pyrophosphatase (202 aa).

Residue 7–12 (SNNPGK) coordinates substrate. Mg(2+) is bound by residues Glu-39 and Asp-68. Asp-68 functions as the Proton acceptor in the catalytic mechanism. Substrate contacts are provided by residues Ala-69, 157-160 (FGFD), Lys-180, and 185-186 (HR).

Belongs to the HAM1 NTPase family. In terms of assembly, homodimer. Mg(2+) serves as cofactor.

The catalysed reaction is XTP + H2O = XMP + diphosphate + H(+). It catalyses the reaction dITP + H2O = dIMP + diphosphate + H(+). The enzyme catalyses ITP + H2O = IMP + diphosphate + H(+). Pyrophosphatase that catalyzes the hydrolysis of nucleoside triphosphates to their monophosphate derivatives, with a high preference for the non-canonical purine nucleotides XTP (xanthosine triphosphate), dITP (deoxyinosine triphosphate) and ITP. Seems to function as a house-cleaning enzyme that removes non-canonical purine nucleotides from the nucleotide pool, thus preventing their incorporation into DNA/RNA and avoiding chromosomal lesions. This chain is dITP/XTP pyrophosphatase, found in Polaromonas naphthalenivorans (strain CJ2).